A 59-amino-acid polypeptide reads, in one-letter code: Ribosome biogenesis protein Nop10 (59 aa).

Belongs to the NOP10 family.

Functionally, involved in ribosome biogenesis; more specifically in 18S rRNA pseudouridylation and in cleavage of pre-rRNA. In Thermococcus gammatolerans (strain DSM 15229 / JCM 11827 / EJ3), this protein is Ribosome biogenesis protein Nop10.